The chain runs to 382 residues: MTEHAIKYRLIKKEKHTGARLGEIITPHGTFPTPMFMPVGTQATVKTMSPEELKTLGSGIILSNTYHLWLRPGDELVAEAGGLHKFMNWDQPILTDSGGFQVYSLVQNKKNITEEGVKFKSHLDGRELFLNPEKAISIQNNLGSDIMMSFDECPPFYQPYDYVKASVERTSRWAERGLNAHRRPNDQGLFGIVQGAGFEDLRRQSASDLTSMDFAGYSIGGLAVGESHKEMNAVLDFTTPMLPEDKPRYLMGVGAPDSLIDGVIRGVDMFDCVLPTRIARNGTLMTHFGRVNIRNAKYEHDFTPLDPMCDCYTCTNYTRAYLRHLIKADETFGLRLCSYHNLHFLVNLMKDVRQAIMDDNLLEFREDFCERYGYNQPNAKDF.

Asp-96 acts as the Proton acceptor in catalysis. Substrate-binding positions include 96–100, Asp-151, Gln-194, and Gly-221; that span reads DSGGF. An RNA binding region spans residues 252–258; sequence GVGAPDS. Asp-271 serves as the catalytic Nucleophile. Positions 276–280 are RNA binding; important for wobble base 34 recognition; sequence TRIAR. Positions 309, 311, 314, and 340 each coordinate Zn(2+).

This sequence belongs to the queuine tRNA-ribosyltransferase family. As to quaternary structure, homodimer. Within each dimer, one monomer is responsible for RNA recognition and catalysis, while the other monomer binds to the replacement base PreQ1. The cofactor is Zn(2+).

The enzyme catalyses 7-aminomethyl-7-carbaguanine + guanosine(34) in tRNA = 7-aminomethyl-7-carbaguanosine(34) in tRNA + guanine. The protein operates within tRNA modification; tRNA-queuosine biosynthesis. Catalyzes the base-exchange of a guanine (G) residue with the queuine precursor 7-aminomethyl-7-deazaguanine (PreQ1) at position 34 (anticodon wobble position) in tRNAs with GU(N) anticodons (tRNA-Asp, -Asn, -His and -Tyr). Catalysis occurs through a double-displacement mechanism. The nucleophile active site attacks the C1' of nucleotide 34 to detach the guanine base from the RNA, forming a covalent enzyme-RNA intermediate. The proton acceptor active site deprotonates the incoming PreQ1, allowing a nucleophilic attack on the C1' of the ribose to form the product. After dissociation, two additional enzymatic reactions on the tRNA convert PreQ1 to queuine (Q), resulting in the hypermodified nucleoside queuosine (7-(((4,5-cis-dihydroxy-2-cyclopenten-1-yl)amino)methyl)-7-deazaguanosine). The chain is Queuine tRNA-ribosyltransferase from Lactococcus lactis subsp. cremoris (strain SK11).